The primary structure comprises 192 residues: Orotate phosphoribosyltransferase (192 aa).

Glutamate 116–serine 124 provides a ligand contact to 5-phospho-alpha-D-ribose 1-diphosphate. Orotate is bound by residues threonine 120 and arginine 148.

Belongs to the purine/pyrimidine phosphoribosyltransferase family. PyrE subfamily. In terms of assembly, homodimer. Mg(2+) is required as a cofactor.

It catalyses the reaction orotidine 5'-phosphate + diphosphate = orotate + 5-phospho-alpha-D-ribose 1-diphosphate. It functions in the pathway pyrimidine metabolism; UMP biosynthesis via de novo pathway; UMP from orotate: step 1/2. Its function is as follows. Catalyzes the transfer of a ribosyl phosphate group from 5-phosphoribose 1-diphosphate to orotate, leading to the formation of orotidine monophosphate (OMP). This chain is Orotate phosphoribosyltransferase, found in Clostridium perfringens (strain ATCC 13124 / DSM 756 / JCM 1290 / NCIMB 6125 / NCTC 8237 / Type A).